A 34-amino-acid chain; its full sequence is MEVNILAFIATVLFILVPTAFLLIIYVKTVSQND.

The helical transmembrane segment at 5–25 threads the bilayer; the sequence is ILAFIATVLFILVPTAFLLII.

It belongs to the PsbM family. In terms of assembly, PSII is composed of 1 copy each of membrane proteins PsbA, PsbB, PsbC, PsbD, PsbE, PsbF, PsbH, PsbI, PsbJ, PsbK, PsbL, PsbM, PsbT, PsbX, PsbY, PsbZ, Psb30/Ycf12, at least 3 peripheral proteins of the oxygen-evolving complex and a large number of cofactors. It forms dimeric complexes.

It is found in the plastid. The protein localises to the chloroplast thylakoid membrane. Its function is as follows. One of the components of the core complex of photosystem II (PSII). PSII is a light-driven water:plastoquinone oxidoreductase that uses light energy to abstract electrons from H(2)O, generating O(2) and a proton gradient subsequently used for ATP formation. It consists of a core antenna complex that captures photons, and an electron transfer chain that converts photonic excitation into a charge separation. This subunit is found at the monomer-monomer interface. This is Photosystem II reaction center protein M from Piper cenocladum (Ant piper).